The chain runs to 305 residues: RNA-binding protein with serine-rich domain 1 (305 aa).

Residues 1-10 (MDLSGVKKKS) are compositionally biased toward basic residues. Residues 1–161 (MDLSGVKKKS…KRRSPSPKPT (161 aa)) are necessary for interaction with SRP54, nuclear localization and exon-skipping. Residues 1 to 170 (MDLSGVKKKS…TKVHIGRLTR (170 aa)) are disordered. The interval 1–220 (MDLSGVKKKS…ENPDEAEKAL (220 aa)) is necessary for interaction with the cleaved p110 isoform of CDC2L1. Residues Lys-7 and Lys-15 each participate in a glycyl lysine isopeptide (Lys-Gly) (interchain with G-Cter in SUMO2) cross-link. Residues 33-59 (DRSDEKSKDRSKDKGTTKESSEKDRGR) are compositionally biased toward basic and acidic residues. A Phosphoserine modification is found at Ser-53. A compositionally biased stretch (low complexity) spans 68–126 (ASSGSSSTRSRSSSTSSSGSSTSTGSSSGSSSSSASSRSGSSSTSRSSSSSSSSGSPSP). Positions 69-121 (SSGSSSTRSRSSSTSSSGSSTSTGSSSGSSSSSASSRSGSSSTSRSSSSSSSS) are necessary for interactions with UPF2 and UPF3B and UPF2-dependent NMD. 2 stretches are compositionally biased toward basic residues: residues 127 to 143 (SRRR…KSKP) and 151 to 167 (RKRR…HIGR). A phosphoserine mark is found at Ser-155 and Ser-157. Residues 156–242 (PSPKPTKVHI…ITATAVLAPW (87 aa)) form a necessary for interaction with PNN and exon-skipping region. An interaction with SAP18 and ACIN1 region spans residues 159-244 (KPTKVHIGRL…ATAVLAPWPR (86 aa)). A Phosphothreonine modification is found at Thr-161. Residues 161–240 (TKVHIGRLTR…QEITATAVLA (80 aa)) form the RRM domain. Lys-218 is subject to N6-acetyllysine. The tract at residues 238–305 (VLAPWPRPPP…RSRSSSNSSR (68 aa)) is necessary for interaction with TRA2B, nuclear localization and exon-skipping. The disordered stretch occupies residues 240–305 (APWPRPPPRR…RSRSSSNSSR (66 aa)). Residues 242 to 262 (WPRPPPRRFSPPRRMLPPPPM) show a composition bias toward pro residues. A compositionally biased stretch (basic residues) spans 266 to 298 (SPPRMRRRSRSPRRRSPVRRRSRSPGRRRHRSR).

It belongs to the splicing factor SR family. As to quaternary structure, found in mRNA splicing-dependent exon junction complexes (EJC). Found in a post-splicing complex with NXF1, RBM8A, UPF1, UPF2, UPF3A, UPF3B and RNPS1. Component of the heterotrimeric ASAP (apoptosis- and splicing-associated protein) and PSAP complexes consisting of RNPS1, SAP18 and either ACIN1 or PNN, respectively; the ASAP and PSAP complexes probably are formed mutually exclusive. Component of the active spliceosome. Associates with polysomes. Interacts with the cleaved p110 isoform of CDC2L1, CSNK2A1, PNN, SART3, SRP54, SRRM1 and TRA2B/SFRS10. Phosphorylated on one or more of the four Ser/Thr residues (Ser-43, Thr-49, Ser-52 or Ser-53). Ser-53 phosphorylation site is important for splicing and translation stimulation activity in vitro.

It localises to the nucleus. The protein resides in the nucleus speckle. It is found in the cytoplasm. Functionally, part of pre- and post-splicing multiprotein mRNP complexes. Auxiliary component of the splicing-dependent multiprotein exon junction complex (EJC) deposited at splice junction on mRNAs. The EJC is a dynamic structure consisting of core proteins and several peripheral nuclear and cytoplasmic associated factors that join the complex only transiently either during EJC assembly or during subsequent mRNA metabolism. Component of the ASAP and PSAP complexes which bind RNA in a sequence-independent manner and are proposed to be recruited to the EJC prior to or during the splicing process and to regulate specific excision of introns in specific transcription subsets. The ASAP complex can inhibit RNA processing during in vitro splicing reactions. The ASAP complex promotes apoptosis and is disassembled after induction of apoptosis. Enhances the formation of the ATP-dependent A complex of the spliceosome. Involved in both constitutive splicing and, in association with SRP54 and TRA2B/SFRS10, in distinctive modulation of alternative splicing in a substrate-dependent manner. Involved in the splicing modulation of BCL2L1/Bcl-X (and probably other apoptotic genes); specifically inhibits formation of proapoptotic isoforms such as Bcl-X(S); the activity is different from the established EJC assembly and function. Participates in mRNA 3'-end cleavage. Involved in UPF2-dependent nonsense-mediated decay (NMD) of mRNAs containing premature stop codons. Also mediates increase of mRNA abundance and translational efficiency. Binds spliced mRNA 20-25 nt upstream of exon-exon junctions. This Rattus norvegicus (Rat) protein is RNA-binding protein with serine-rich domain 1 (Rnps1).